Reading from the N-terminus, the 309-residue chain is MSGERAKRFPLALEDLKRAPRKSDGRAGERHAAIAAPKAADKPAAVPKPVALKPGVARMPPGTAAAKPATALKPTVPKPAMPKPIAANAAPAGAFALTSERVRERMVERLRANGVTDPRVLDAMAAVPRHLFVDAGLATQAYEDSALPIGHQQTISKPSVVARMIELAMAGRTLERVLEIGTGCGYQAAVLSHVARDVYSIERIKPLYERAKLNLRPLRVPNIRLHYGDGRVGLPSAAPFDAIVIAAAGLDVPQALLEQLAIGGRLVAPVGAQSGQPQVLTLIERVAHAQWRESRLDRVFFVPLKSGVI.

The segment at 1 to 46 (MSGERAKRFPLALEDLKRAPRKSDGRAGERHAAIAAPKAADKPAAV) is disordered. A compositionally biased stretch (basic and acidic residues) spans 14–32 (EDLKRAPRKSDGRAGERHA). A compositionally biased stretch (low complexity) spans 33-46 (AIAAPKAADKPAAV). Serine 156 is a catalytic residue.

Belongs to the methyltransferase superfamily. L-isoaspartyl/D-aspartyl protein methyltransferase family.

The protein resides in the cytoplasm. The enzyme catalyses [protein]-L-isoaspartate + S-adenosyl-L-methionine = [protein]-L-isoaspartate alpha-methyl ester + S-adenosyl-L-homocysteine. In terms of biological role, catalyzes the methyl esterification of L-isoaspartyl residues in peptides and proteins that result from spontaneous decomposition of normal L-aspartyl and L-asparaginyl residues. It plays a role in the repair and/or degradation of damaged proteins. This is Protein-L-isoaspartate O-methyltransferase from Burkholderia vietnamiensis (strain G4 / LMG 22486) (Burkholderia cepacia (strain R1808)).